The chain runs to 118 residues: Iron-sulfur cluster assembly protein CyaY (118 aa).

This sequence belongs to the frataxin family.

In terms of biological role, involved in iron-sulfur (Fe-S) cluster assembly. May act as a regulator of Fe-S biogenesis. This chain is Iron-sulfur cluster assembly protein CyaY, found in Buchnera aphidicola subsp. Baizongia pistaciae (strain Bp).